The sequence spans 375 residues: Trichodiene synthase (375 aa).

Belongs to the trichodiene synthase family.

The enzyme catalyses (2E,6E)-farnesyl diphosphate = trichodiene + diphosphate. Its pathway is sesquiterpene biosynthesis; trichothecene biosynthesis. Its function is as follows. TS is a member of the terpene cyclase group of enzymes. It catalyzes the isomerization and cyclization of farnesyl pyro-phosphate to form trichodiene, the first cyclic intermediate in the biosynthetic pathway for trichothecenes. It serves to branch trichothecene biosynthesis from the isoprenoid pathway. This is Trichodiene synthase (TRI5) from Fusarium acaciae-mearnsii.